The chain runs to 119 residues: DNA-binding protein inhibitor ID-3 (119 aa).

Residues 28-80 (RGKSPSTEEPLSLLDDMNHCYSRLRELVPGVPRGTQLSQVEILQRVIDYILDL) enclose the bHLH domain. An interaction with IFI204 region spans residues 35-87 (EEPLSLLDDMNHCYSRLRELVPGVPRGTQLSQVEILQRVIDYILDLQVVLAEP).

Homodimer, and heterodimer with other HLH proteins. Interacts with CLOCK and BMAL1. Interacts with COPS5 and COPS7A. Interacts with IFI204. Interacts with GATA4 and NKX2-5. Interacts with ANKRD2; both proteins cooperate in myoblast differentiation. Polyubiquitinated; which is favored by Ifi204 and leads to proteasomal degradation. As to expression, expressed by myoblasts (at protein level).

The protein localises to the nucleus. It is found in the cytoplasm. Its function is as follows. Transcriptional regulator (lacking a basic DNA binding domain) which negatively regulates the basic helix-loop-helix (bHLH) transcription factors by forming heterodimers and inhibiting their DNA binding and transcriptional activity. Implicated in regulating a variety of cellular processes, including cellular growth, senescence, differentiation, apoptosis, angiogenesis, and neoplastic transformation. Involved in myogenesis by inhibiting skeletal muscle and cardiac myocyte differentiation and promoting muscle precursor cells proliferation. Inhibits the binding of E2A-containing protein complexes to muscle creatine kinase E-box enhancer. Regulates the circadian clock by repressing the transcriptional activator activity of the CLOCK-BMAL1 heterodimer. This is DNA-binding protein inhibitor ID-3 (Id3) from Mus musculus (Mouse).